The chain runs to 692 residues: Elongation factor G (692 aa).

Positions 8–283 (KNTRNIGIMA…AVVDYLPSPV (276 aa)) constitute a tr-type G domain. GTP-binding positions include 17-24 (AHIDAGKT), 81-85 (DTPGH), and 135-138 (NKMD).

The protein belongs to the TRAFAC class translation factor GTPase superfamily. Classic translation factor GTPase family. EF-G/EF-2 subfamily.

It is found in the cytoplasm. In terms of biological role, catalyzes the GTP-dependent ribosomal translocation step during translation elongation. During this step, the ribosome changes from the pre-translocational (PRE) to the post-translocational (POST) state as the newly formed A-site-bound peptidyl-tRNA and P-site-bound deacylated tRNA move to the P and E sites, respectively. Catalyzes the coordinated movement of the two tRNA molecules, the mRNA and conformational changes in the ribosome. The sequence is that of Elongation factor G from Exiguobacterium sp. (strain ATCC BAA-1283 / AT1b).